The primary structure comprises 86 residues: Small ribosomal subunit protein uS17 (86 aa).

The protein belongs to the universal ribosomal protein uS17 family. Part of the 30S ribosomal subunit.

One of the primary rRNA binding proteins, it binds specifically to the 5'-end of 16S ribosomal RNA. This Halalkalibacterium halodurans (strain ATCC BAA-125 / DSM 18197 / FERM 7344 / JCM 9153 / C-125) (Bacillus halodurans) protein is Small ribosomal subunit protein uS17.